The chain runs to 380 residues: M-protease (380 aa).

A signal peptide spans 1 to 27 (MKKPLGKIVASTALLISVAFSSSIASA). The propeptide occupies 28–111 (AEEAKEKYLI…IEEDAEVTTM (84 aa)). The 78-residue stretch at 34-111 (KYLIGFNEQE…IEEDAEVTTM (78 aa)) folds into the Inhibitor I9 domain. Glutamine 113 contributes to the Ca(2+) binding site. The region spanning 116–379 (PWGISRVQAP…SGLVNAEAAT (264 aa)) is the Peptidase S8 domain. Aspartate 143 functions as the Charge relay system in the catalytic mechanism. Aspartate 151 serves as a coordination point for Ca(2+). The active-site Charge relay system is histidine 173. The Ca(2+) site is built by leucine 184, asparagine 186, isoleucine 188, valine 190, alanine 274, tyrosine 276, alanine 279, and aspartate 302. Serine 326 (charge relay system) is an active-site residue.

This sequence belongs to the peptidase S8 family. Monomer. The cofactor is Ca(2+).

The protein localises to the secreted. Activity is inhibited by phenylmethylsulfonyl fluoride and chymostatin. Functionally, alkaline serine protease that cleaves various substrates, including N-succinyl-Ala-Ala-Pro-Phe-pNA, N-succinyl-Ala-Ala-Pro-MetpNA, oxidized insulin B chain, casein, hemoglobin and scleroproteins, such as keratin, alpha-keratin and elastin. This is M-protease (aprE) from Shouchella clausii (strain KSM-K16) (Alkalihalobacillus clausii).